The primary structure comprises 170 residues: Adenine phosphoribosyltransferase (170 aa).

This sequence belongs to the purine/pyrimidine phosphoribosyltransferase family. As to quaternary structure, homodimer.

The protein localises to the cytoplasm. It carries out the reaction AMP + diphosphate = 5-phospho-alpha-D-ribose 1-diphosphate + adenine. The protein operates within purine metabolism; AMP biosynthesis via salvage pathway; AMP from adenine: step 1/1. Functionally, catalyzes a salvage reaction resulting in the formation of AMP, that is energically less costly than de novo synthesis. The chain is Adenine phosphoribosyltransferase from Flavobacterium johnsoniae (strain ATCC 17061 / DSM 2064 / JCM 8514 / BCRC 14874 / CCUG 350202 / NBRC 14942 / NCIMB 11054 / UW101) (Cytophaga johnsonae).